A 445-amino-acid polypeptide reads, in one-letter code: Chromosome partition protein MukF (445 aa).

Positions 213–241 are leucine-zipper; the sequence is LSETSNTLKELQDTLQAAGDELQTQILDI.

The protein belongs to the MukF family. As to quaternary structure, interacts, and probably forms a ternary complex, with MukE and MukB via its C-terminal region. The complex formation is stimulated by calcium or magnesium. It is required for an interaction between MukE and MukB.

It is found in the cytoplasm. It localises to the nucleoid. Functionally, involved in chromosome condensation, segregation and cell cycle progression. May participate in facilitating chromosome segregation by condensation DNA from both sides of a centrally located replisome during cell division. Not required for mini-F plasmid partitioning. Probably acts via its interaction with MukB and MukE. Overexpression results in anucleate cells. It has a calcium binding activity. The chain is Chromosome partition protein MukF from Vibrio vulnificus (strain YJ016).